Consider the following 515-residue polypeptide: RNA exonuclease NGL2 (515 aa).

Disordered regions lie at residues 1 to 54 (MTQD…SKPI) and 353 to 381 (RDGE…PVPE). Residues 21–34 (EINKSVKDAKHQTN) show a composition bias toward basic and acidic residues. Basic residues predominate over residues 40 to 52 (QHKKKGKKGKKSK). The segment covering 369-381 (KYGKDQPESPVPE) has biased composition (basic and acidic residues).

It belongs to the CCR4/nocturin family.

It localises to the cytoplasm. It is found in the nucleus. Functionally, involved in pre-rRNA processing. Required for the final stage of 3'-end maturation of 5.8S rRNA at site E. This Saccharomyces cerevisiae (strain ATCC 204508 / S288c) (Baker's yeast) protein is RNA exonuclease NGL2 (NGL2).